The following is a 254-amino-acid chain: 5-keto-D-gluconate 5-reductase (254 aa).

13-37 is an NADP(+) binding site; it reads LITGSAQGIGFLLATGLGKYGAQII. Ser-145 is a substrate binding site. Tyr-158 (proton acceptor) is an active-site residue.

This sequence belongs to the short-chain dehydrogenases/reductases (SDR) family.

It carries out the reaction D-gluconate + NAD(+) = 5-dehydro-D-gluconate + NADH + H(+). The catalysed reaction is D-gluconate + NADP(+) = 5-dehydro-D-gluconate + NADPH + H(+). Its pathway is carbohydrate acid metabolism; L-idonate degradation. In terms of biological role, catalyzes the reduction of 5-keto-D-gluconate to D-gluconate, using either NADH or NADPH. Is likely involved in an L-idonate degradation pathway that allows E.coli to utilize L-idonate as the sole carbon and energy source. Is also able to catalyze the reverse reaction in vitro, but the D-gluconate oxidation by the enzyme can only proceed with NAD. This is 5-keto-D-gluconate 5-reductase from Escherichia coli O6:H1 (strain CFT073 / ATCC 700928 / UPEC).